A 222-amino-acid polypeptide reads, in one-letter code: MAYDSNYTFPDPETSDKQGLLAIGGVLTPKRVLQAYSQGIFPWYEPGNPVLWWSPNPRLILIPNEFKISRSLKKTLKKPFKLTVDTAFQRVISYCATCSDRSNKTWITSEMIETYTQLHEMGYAHSFEIWDGSELVGGLYGISLGHAFFGESMFHTITDASKVALHFLCRIMQSWNFDFIDCQLPTLHLMSLGAKIISRKEFLHMLQETLKYPDKKGNWSID.

The protein belongs to the L/F-transferase family.

It is found in the cytoplasm. The catalysed reaction is N-terminal L-lysyl-[protein] + L-leucyl-tRNA(Leu) = N-terminal L-leucyl-L-lysyl-[protein] + tRNA(Leu) + H(+). It catalyses the reaction N-terminal L-arginyl-[protein] + L-leucyl-tRNA(Leu) = N-terminal L-leucyl-L-arginyl-[protein] + tRNA(Leu) + H(+). It carries out the reaction L-phenylalanyl-tRNA(Phe) + an N-terminal L-alpha-aminoacyl-[protein] = an N-terminal L-phenylalanyl-L-alpha-aminoacyl-[protein] + tRNA(Phe). Functions in the N-end rule pathway of protein degradation where it conjugates Leu, Phe and, less efficiently, Met from aminoacyl-tRNAs to the N-termini of proteins containing an N-terminal arginine or lysine. The sequence is that of Leucyl/phenylalanyl-tRNA--protein transferase from Legionella pneumophila (strain Corby).